Consider the following 340-residue polypeptide: Tryptophan--tRNA ligase (340 aa).

Residues Arg11–Thr13 and Gly19–His20 each bind ATP. Residues Pro12–His20 carry the 'HIGH' region motif. Asp140 contacts L-tryptophan. Residues Gly152–Asp154, Leu194, and Lys202–Ser206 each bind ATP. Residues Lys202–Ser206 carry the 'KMSKS' region motif.

Belongs to the class-I aminoacyl-tRNA synthetase family. Homodimer.

Its subcellular location is the cytoplasm. It catalyses the reaction tRNA(Trp) + L-tryptophan + ATP = L-tryptophyl-tRNA(Trp) + AMP + diphosphate + H(+). Functionally, catalyzes the attachment of tryptophan to tRNA(Trp). The chain is Tryptophan--tRNA ligase from Streptococcus pyogenes serotype M1.